We begin with the raw amino-acid sequence, 137 residues long: Ribonuclease VapC3 (137 aa).

The 118-residue stretch at 12 to 129 (VVVDASAMVD…LTTDERLARA (118 aa)) folds into the PINc domain. Asp15 and Asp105 together coordinate Mg(2+).

The protein belongs to the PINc/VapC protein family. The cofactor is Mg(2+).

Toxic component of a type II toxin-antitoxin (TA) system. An RNase. Its toxic effect is neutralized by coexpression with cognate antitoxin VapB3. This is Ribonuclease VapC3 from Mycobacterium tuberculosis (strain CDC 1551 / Oshkosh).